We begin with the raw amino-acid sequence, 430 residues long: Gamma-glutamyl phosphate reductase (430 aa).

Belongs to the gamma-glutamyl phosphate reductase family.

It localises to the cytoplasm. It catalyses the reaction L-glutamate 5-semialdehyde + phosphate + NADP(+) = L-glutamyl 5-phosphate + NADPH + H(+). It functions in the pathway amino-acid biosynthesis; L-proline biosynthesis; L-glutamate 5-semialdehyde from L-glutamate: step 2/2. Catalyzes the NADPH-dependent reduction of L-glutamate 5-phosphate into L-glutamate 5-semialdehyde and phosphate. The product spontaneously undergoes cyclization to form 1-pyrroline-5-carboxylate. The polypeptide is Gamma-glutamyl phosphate reductase (Rhodopseudomonas palustris (strain TIE-1)).